The primary structure comprises 854 residues: Periodic tryptophan protein 2 homolog (854 aa).

WD repeat units follow at residues Asn9–Phe52, Glu53–Phe93, Asn94–Glu132, Gly144–Pro183, Gly188–Glu227, Asn252–Gln291, Ile294–Lys334, Ser337–Thr376, Gln379–Thr418, Pro422–Ala464, Gly465–Glu504, Pro507–Leu546, and Ser569–Lys608. The residue at position 640 (Thr640) is a Phosphothreonine. A Phosphoserine modification is found at Ser645. Residues Thr668–Asn709 form a WD 14 repeat.

The protein belongs to the WD repeat PWP2 family.

In Schizosaccharomyces pombe (strain 972 / ATCC 24843) (Fission yeast), this protein is Periodic tryptophan protein 2 homolog.